Reading from the N-terminus, the 236-residue chain is Increased recombination centers protein 22-2 (236 aa).

Positions 1–19 (MKFSAILTALTATIATVAG) are cleaved as a signal peptide. At 20 to 161 (YETSGKPHTV…AAVSFFDPRL (142 aa)) the chain is on the lumenal side. A helical membrane pass occupies residues 162–182 (IFLELVLLATFGGIAYFVYEI). The Cytoplasmic segment spans residues 183–236 (WGKQYLRGTAPVKVPVKKSGSPVAVKEASPVGSASGFDESWIPEAHLKKNKKKA).

This sequence belongs to the IRC22 family.

The protein resides in the endoplasmic reticulum membrane. Functionally, is probably involved in a pathway contributing to genomic integrity. This Candida tropicalis (strain ATCC MYA-3404 / T1) (Yeast) protein is Increased recombination centers protein 22-2 (IRC22-2).